The sequence spans 1070 residues: DNA-directed RNA polymerase subunit beta (1070 aa).

The protein belongs to the RNA polymerase beta chain family. In plastids the minimal PEP RNA polymerase catalytic core is composed of four subunits: alpha, beta, beta', and beta''. When a (nuclear-encoded) sigma factor is associated with the core the holoenzyme is formed, which can initiate transcription.

The protein resides in the plastid. The protein localises to the chloroplast. It carries out the reaction RNA(n) + a ribonucleoside 5'-triphosphate = RNA(n+1) + diphosphate. In terms of biological role, DNA-dependent RNA polymerase catalyzes the transcription of DNA into RNA using the four ribonucleoside triphosphates as substrates. In Gossypium barbadense (Sea Island cotton), this protein is DNA-directed RNA polymerase subunit beta.